The chain runs to 1187 residues: DNA-directed RNA polymerase subunit beta (1187 aa).

Residues 1150–1187 (KDEDDDPASSADDLGFNIGARPDAAAKEDQKAEEPEYQ) form a disordered region. Positions 1173–1187 (AAAKEDQKAEEPEYQ) are enriched in basic and acidic residues.

The protein belongs to the RNA polymerase beta chain family. As to quaternary structure, the RNAP catalytic core consists of 2 alpha, 1 beta, 1 beta' and 1 omega subunit. When a sigma factor is associated with the core the holoenzyme is formed, which can initiate transcription.

It carries out the reaction RNA(n) + a ribonucleoside 5'-triphosphate = RNA(n+1) + diphosphate. DNA-dependent RNA polymerase catalyzes the transcription of DNA into RNA using the four ribonucleoside triphosphates as substrates. In Bifidobacterium longum (strain NCC 2705), this protein is DNA-directed RNA polymerase subunit beta.